Here is a 462-residue protein sequence, read N- to C-terminus: UDP-N-acetylmuramate--L-alanine ligase (462 aa).

116–122 (GAHGKTT) serves as a coordination point for ATP.

The protein belongs to the MurCDEF family.

The protein localises to the cytoplasm. The catalysed reaction is UDP-N-acetyl-alpha-D-muramate + L-alanine + ATP = UDP-N-acetyl-alpha-D-muramoyl-L-alanine + ADP + phosphate + H(+). It functions in the pathway cell wall biogenesis; peptidoglycan biosynthesis. Functionally, cell wall formation. The polypeptide is UDP-N-acetylmuramate--L-alanine ligase (Desulforamulus reducens (strain ATCC BAA-1160 / DSM 100696 / MI-1) (Desulfotomaculum reducens)).